Consider the following 724-residue polypeptide: uncharacterized protein (724 aa).

This is an uncharacterized protein from Treponema pallidum (strain Nichols).